We begin with the raw amino-acid sequence, 360 residues long: Phospho-N-acetylmuramoyl-pentapeptide-transferase (360 aa).

Transmembrane regions (helical) follow at residues 26–46 (AILSVLTALGLSLWMGPIMIK), 70–90 (GTPTMGGIMILAAISITILLW), 94–114 (SNPYVWAVLTVLLGYGAIGFV), 132–152 (WKYFWQSLIAFVVAFALYAYG), 168–188 (IMPQLGLMYIILTYFVIVGTS), 199–219 (GLAIMPTVLVAAGFAVIAWAT), 236–256 (ASELVVVCTAIVGAGLGFLWF), 263–283 (VFMGDVGSLALGGALGTIAVL), 288–308 (LILVIMGGVFVMETLSVILQV), and 338–358 (VIVRFWIISMVLVLIGLATLK).

The protein belongs to the glycosyltransferase 4 family. MraY subfamily. It depends on Mg(2+) as a cofactor.

It localises to the cell inner membrane. The catalysed reaction is UDP-N-acetyl-alpha-D-muramoyl-L-alanyl-gamma-D-glutamyl-meso-2,6-diaminopimeloyl-D-alanyl-D-alanine + di-trans,octa-cis-undecaprenyl phosphate = di-trans,octa-cis-undecaprenyl diphospho-N-acetyl-alpha-D-muramoyl-L-alanyl-D-glutamyl-meso-2,6-diaminopimeloyl-D-alanyl-D-alanine + UMP. It functions in the pathway cell wall biogenesis; peptidoglycan biosynthesis. In terms of biological role, catalyzes the initial step of the lipid cycle reactions in the biosynthesis of the cell wall peptidoglycan: transfers peptidoglycan precursor phospho-MurNAc-pentapeptide from UDP-MurNAc-pentapeptide onto the lipid carrier undecaprenyl phosphate, yielding undecaprenyl-pyrophosphoryl-MurNAc-pentapeptide, known as lipid I. The sequence is that of Phospho-N-acetylmuramoyl-pentapeptide-transferase from Vibrio campbellii (strain ATCC BAA-1116).